Reading from the N-terminus, the 447-residue chain is UPF0597 protein Amet_4665 (447 aa).

Belongs to the UPF0597 family.

The polypeptide is UPF0597 protein Amet_4665 (Alkaliphilus metalliredigens (strain QYMF)).